The primary structure comprises 595 residues: MAETDIAMPESTPVDSRPAFAIVEELKTKFGENFYVQTTCEEFPTVWVERSRVQEVLMFLRKVDRPYVMLFDLSAMDERLRVHRDGLPASDFTVFYHLLSLERNSDIRIKVALNESDLNIPTATNIWPNANWYEREAYDMFGINFEGHPMLRRILLPTYWEGHPLRKEYSARATEYTPYMQNQAKQDFEQEHLRFVPEDWGLKRGNADEDFMFLNLGPNHPSAHGAFRVVLQLDGEEVKDCVPDIGYHHRGVEKMAERQTWHSFIPYTDRVDYLGGCAQNMPYVMAVEQLAGIKVPERAQVIRVMLNELFRINNHLLFCGTAIQDAGGMTPVFYMFADRQKVYDIVEAITGYRMHPAWFRIGGTAHDLPNNWHKLVKELLEWMPKRLNEYHTAALKNSVFIGRTRNVAQYDAKSALAWGVTGTGLRATGIDFDVRKYRPYSGYENFDFDVPLEYEGDAYARVMVHFREITESLKIIQQCLDNMPSGPYKADHPLAVPPPKDKTLQDIETLITHFLSVSWGPVMPAGEASFMTEVVKGASTYYLTSDKSTMSYRTRIRTPTFTHLQQMPSVINGSLVSDLIIYLATIDVVMADVDR.

Residues 1–186 (MAETDIAMPE…TPYMQNQAKQ (186 aa)) form an NADH dehydrogenase I subunit C region. An NADH dehydrogenase I subunit D region spans residues 210 to 595 (DFMFLNLGPN…IDVVMADVDR (386 aa)).

This sequence in the N-terminal section; belongs to the complex I 30 kDa subunit family. It in the C-terminal section; belongs to the complex I 49 kDa subunit family. As to quaternary structure, NDH-1 is composed of 13 different subunits. Subunits NuoB, CD, E, F, and G constitute the peripheral sector of the complex.

It localises to the cell inner membrane. It carries out the reaction a quinone + NADH + 5 H(+)(in) = a quinol + NAD(+) + 4 H(+)(out). Functionally, NDH-1 shuttles electrons from NADH, via FMN and iron-sulfur (Fe-S) centers, to quinones in the respiratory chain. The immediate electron acceptor for the enzyme in this species is believed to be ubiquinone. Couples the redox reaction to proton translocation (for every two electrons transferred, four hydrogen ions are translocated across the cytoplasmic membrane), and thus conserves the redox energy in a proton gradient. The chain is NADH-quinone oxidoreductase subunit C/D from Acinetobacter baylyi (strain ATCC 33305 / BD413 / ADP1).